Reading from the N-terminus, the 1208-residue chain is DNA-directed RNA polymerase subunit beta (1208 aa).

This sequence belongs to the RNA polymerase beta chain family. The RNAP catalytic core consists of 2 alpha, 1 beta, 1 beta' and 1 omega subunit. When a sigma factor is associated with the core the holoenzyme is formed, which can initiate transcription.

The enzyme catalyses RNA(n) + a ribonucleoside 5'-triphosphate = RNA(n+1) + diphosphate. Its function is as follows. DNA-dependent RNA polymerase catalyzes the transcription of DNA into RNA using the four ribonucleoside triphosphates as substrates. In Enterococcus faecium (Streptococcus faecium), this protein is DNA-directed RNA polymerase subunit beta.